The following is an 83-amino-acid chain: Large ribosomal subunit protein bL31B (83 aa).

The protein belongs to the bacterial ribosomal protein bL31 family. Type B subfamily. Part of the 50S ribosomal subunit.

In terms of biological role, binds the 23S rRNA. This chain is Large ribosomal subunit protein bL31B, found in Hydrogenovibrio crunogenus (strain DSM 25203 / XCL-2) (Thiomicrospira crunogena).